The primary structure comprises 317 residues: MVLTQLRIASRRSQLAMVQTNWVQAELEQAHPGLSISVEAMATQGDKILDVALAKIGDKGLFTKELEAQMLIGRADIAVHSLKDLPTNLPEGLMLGCVTEREDPADALVVNQKNAEHQLDTLPEGAIVGTSSLRRLAQLRHHYPHLVFKDVRGNVITRLEKLDAGNYDCLILAAAGLTRLGFGDRIHQLIPSEISLHAVGQGALGIECVEGHPEVLEVIKALEHKPTAQRCLAERALLRELEGGCQVPIGVNSRIEANELLLTGMVASLDGKRLIRDQQRGPIDRCEAIGKELAETLKSQGAGEILAEIFAAVRPEA.

Position 245 is an S-(dipyrrolylmethanemethyl)cysteine (C245).

It belongs to the HMBS family. As to quaternary structure, monomer. Dipyrromethane is required as a cofactor.

The catalysed reaction is 4 porphobilinogen + H2O = hydroxymethylbilane + 4 NH4(+). The protein operates within porphyrin-containing compound metabolism; protoporphyrin-IX biosynthesis; coproporphyrinogen-III from 5-aminolevulinate: step 2/4. Its pathway is porphyrin-containing compound metabolism; chlorophyll biosynthesis. In terms of biological role, tetrapolymerization of the monopyrrole PBG into the hydroxymethylbilane pre-uroporphyrinogen in several discrete steps. This chain is Porphobilinogen deaminase, found in Prochlorococcus marinus (strain MIT 9303).